Here is a 330-residue protein sequence, read N- to C-terminus: Phospholipase C (330 aa).

An N-terminal signal peptide occupies residues 1 to 34 (MVKKTKSNSLKKVATLALANLLLVGALTDNSAKA). A disulfide bridge connects residues cysteine 155 and cysteine 191.

It belongs to the neutral sphingomyelinase family. Monomer.

Its subcellular location is the secreted. It carries out the reaction a 1,2-diacyl-sn-glycero-3-phosphocholine + H2O = phosphocholine + a 1,2-diacyl-sn-glycerol + H(+). Functionally, bacterial hemolysins are exotoxins that attack blood cell membranes and cause cell rupture. Beta-hemolysin is a phospholipase C with specific activity toward sphingomyelins. Has a high specificity for sphingomyelin, hydrolyzes lysophosphatidylcholine at a much lower rate, but has no activity towards phosphatidylcholine, phosphatidylethanolamine, or phosphatidylserine. The protein is Phospholipase C (hlb) of Staphylococcus aureus (strain NCTC 8325 / PS 47).